Reading from the N-terminus, the 449-residue chain is Anthocyanidin 3-O-glucosyltransferase 1 (449 aa).

Histidine 3 (proton acceptor) is an active-site residue. Histidine 3 provides a ligand contact to an anthocyanidin. Aspartate 103 acts as the Charge relay in catalysis. Residues threonine 125, alanine 325, glutamine 327, histidine 342, tryptophan 345, asparagine 346, serine 347, and glutamate 350 each contribute to the UDP-alpha-D-glucose site. Alanine 365 is an an anthocyanidin binding site. The UDP-alpha-D-glucose site is built by glutamate 366 and glutamine 367.

It belongs to the UDP-glycosyltransferase family. As to expression, expressed in cotyledons and roots, but not in leaves.

It carries out the reaction an anthocyanidin + UDP-alpha-D-glucose + H(+) = an anthocyanidin 3-O-beta-D-glucoside + UDP. The protein operates within pigment biosynthesis; anthocyanin biosynthesis. Its function is as follows. In the presence of other necessary color factors, this glycosylation reaction allows the accumulation of anthocyanin pigments. The chain is Anthocyanidin 3-O-glucosyltransferase 1 (GT1) from Manihot esculenta (Cassava).